The following is a 604-amino-acid chain: Sulfite reductase [NADPH] flavoprotein alpha-component (604 aa).

Positions 65–203 (VTILYGSQTG…AAGQWHADVL (139 aa)) constitute a Flavodoxin-like domain. FMN is bound by residues 71 to 76 (SQTGNG), 118 to 121 (STHG), and 154 to 163 (LGDSSYEFFC). The region spanning 236 to 453 (QNPYSAEVLV…VEPNKHFRLP (218 aa)) is the FAD-binding FR-type domain. FAD contacts are provided by residues T324, L358, 392 to 395 (RLYS), 410 to 412 (TVA), and 425 to 428 (GGAS). Residues 524 to 525 (SR), 530 to 534 (KIYVQ), and D566 each bind NADP(+). Residue Y604 coordinates FAD.

Belongs to the NADPH-dependent sulphite reductase flavoprotein subunit CysJ family. This sequence in the N-terminal section; belongs to the flavodoxin family. It in the C-terminal section; belongs to the flavoprotein pyridine nucleotide cytochrome reductase family. As to quaternary structure, alpha(8)-beta(8). The alpha component is a flavoprotein, the beta component is a hemoprotein. FAD is required as a cofactor. It depends on FMN as a cofactor.

It catalyses the reaction hydrogen sulfide + 3 NADP(+) + 3 H2O = sulfite + 3 NADPH + 4 H(+). Its pathway is sulfur metabolism; hydrogen sulfide biosynthesis; hydrogen sulfide from sulfite (NADPH route): step 1/1. Its function is as follows. Component of the sulfite reductase complex that catalyzes the 6-electron reduction of sulfite to sulfide. This is one of several activities required for the biosynthesis of L-cysteine from sulfate. The flavoprotein component catalyzes the electron flow from NADPH -&gt; FAD -&gt; FMN to the hemoprotein component. The protein is Sulfite reductase [NADPH] flavoprotein alpha-component of Shewanella sp. (strain MR-4).